A 417-amino-acid chain; its full sequence is GPI mannosyltransferase 2 (417 aa).

9 helical membrane-spanning segments follow: residues 10-30, 104-124, 142-162, 167-187, 206-226, 239-259, 312-332, 344-364, and 394-414; these read FLII…LVWL, IVLK…WIVY, LALT…LISV, IAFT…SFDV, FCFA…LFYV, ITSI…FVYF, IPNF…ITYF, YIWI…VQII, and YYVM…ACFL.

Belongs to the PIGV family.

It localises to the endoplasmic reticulum membrane. The protein operates within glycolipid biosynthesis; glycosylphosphatidylinositol-anchor biosynthesis. Mannosyltransferase involved in glycosylphosphatidylinositol-anchor biosynthesis. Transfers the second mannose to the glycosylphosphatidylinositol during GPI precursor assembly. The chain is GPI mannosyltransferase 2 (GPI18) from Kluyveromyces lactis (strain ATCC 8585 / CBS 2359 / DSM 70799 / NBRC 1267 / NRRL Y-1140 / WM37) (Yeast).